The following is a 217-amino-acid chain: MNQTLLSSFGTPFERVELALDALREGRGVMVLDDEDRENEGDMIFPAETMTVEQMALTIRHGSGIVCLCITEDRRKQLDLPMMVENNTSAYGTGFTVTIEAAEGVTTGVSAADRVTTVRAAIKDGAKPSDLNRPGHVFPLRAQAGGVLTRGGHTEATIDLMTLAGFKPAGVLCELTNDDGTMARAPECIAFAGQHNMAVVTIEDLVAYRQAHERKAS.

D-ribulose 5-phosphate contacts are provided by residues 37–38 (RE), Asp42, 150–154 (RGGHT), and Glu174. Glu38 contacts Mg(2+). His153 is a binding site for Mg(2+).

This sequence belongs to the DHBP synthase family. In terms of assembly, homodimer. Mg(2+) serves as cofactor. Requires Mn(2+) as cofactor.

It carries out the reaction D-ribulose 5-phosphate = (2S)-2-hydroxy-3-oxobutyl phosphate + formate + H(+). Its pathway is cofactor biosynthesis; riboflavin biosynthesis; 2-hydroxy-3-oxobutyl phosphate from D-ribulose 5-phosphate: step 1/1. In terms of biological role, catalyzes the conversion of D-ribulose 5-phosphate to formate and 3,4-dihydroxy-2-butanone 4-phosphate. In Salmonella heidelberg (strain SL476), this protein is 3,4-dihydroxy-2-butanone 4-phosphate synthase.